The sequence spans 301 residues: Homoserine O-acetyltransferase (301 aa).

Residue Cys142 is the Acyl-thioester intermediate of the active site. Substrate is bound by residues Lys163 and Ser192. Residue His235 is the Proton acceptor of the active site. The active site involves Glu237. Residue Arg249 participates in substrate binding.

This sequence belongs to the MetA family.

The protein resides in the cytoplasm. The catalysed reaction is L-homoserine + acetyl-CoA = O-acetyl-L-homoserine + CoA. It participates in amino-acid biosynthesis; L-methionine biosynthesis via de novo pathway; O-acetyl-L-homoserine from L-homoserine: step 1/1. In terms of biological role, transfers an acetyl group from acetyl-CoA to L-homoserine, forming acetyl-L-homoserine. The polypeptide is Homoserine O-acetyltransferase (Succinatimonas hippei (strain DSM 22608 / JCM 16073 / KCTC 15190 / YIT 12066)).